The chain runs to 42 residues: Large ribosomal subunit protein bL36 (42 aa).

The protein belongs to the bacterial ribosomal protein bL36 family.

In Anaplasma phagocytophilum (strain HZ), this protein is Large ribosomal subunit protein bL36.